We begin with the raw amino-acid sequence, 136 residues long: MVPDAKHAPLPCPCGRPAYDRCCGRHVGTALPAPDAETLMRSRYSAFVLDRREHLLATWHASTRPAAIEPPPPGLRWLGLEVRQHRLTGPDAAEVEFVARSKLAGRAHRLHERSRFVRDQGRWFYLDGEIDPPVAG.

Belongs to the UPF0225 family.

In Methylibium petroleiphilum (strain ATCC BAA-1232 / LMG 22953 / PM1), this protein is UPF0225 protein Mpe_A2093.